We begin with the raw amino-acid sequence, 304 residues long: MKEHRHMTEKSPHSAFGDGAKAYDVPAFGLQIHTVEHGSGAPIVFLHGNPTSSYLWRHIFRRLHGHGRLLAVDLIGYGQSSKPDIEYTLENQQRYVDAWFDALDLRNVTLVLQDYGAAFGLNWASRNPDRVRAVAFFEPVLRNIDSVDLSPEFVTRRAKLRQPGEGEIFVQQENRFLTELFPWFFLTPLAPEDLRQYQTPFPTPHSRKAILAGPRNLPVDGEPASTVAFLEQAVNWLNTSDTPKLLLTFKPGFLLTDAILKWSQVTIRNLEIEAAGAGIHFVQEEQPETIARLLDAWLTRIAGN.

The AB hydrolase-1 domain maps to proline 42–valine 154. Aspartate 114 (nucleophile) is an active-site residue. The Proton donor role is filled by glutamate 138. The Proton acceptor role is filled by histidine 280.

The protein belongs to the haloalkane dehalogenase family. Type 2 subfamily. As to quaternary structure, monomer.

The catalysed reaction is 1-haloalkane + H2O = a halide anion + a primary alcohol + H(+). Catalyzes hydrolytic cleavage of carbon-halogen bonds in halogenated aliphatic compounds, leading to the formation of the corresponding primary alcohols, halide ions and protons. In Agrobacterium fabrum (strain C58 / ATCC 33970) (Agrobacterium tumefaciens (strain C58)), this protein is Haloalkane dehalogenase.